A 355-amino-acid polypeptide reads, in one-letter code: Peptide chain release factor 1 (355 aa).

N5-methylglutamine is present on Q231.

Belongs to the prokaryotic/mitochondrial release factor family. Post-translationally, methylated by PrmC. Methylation increases the termination efficiency of RF1.

Its subcellular location is the cytoplasm. Its function is as follows. Peptide chain release factor 1 directs the termination of translation in response to the peptide chain termination codons UAG and UAA. The polypeptide is Peptide chain release factor 1 (Sulfurovum sp. (strain NBC37-1)).